The chain runs to 713 residues: Cadherin-13 (713 aa).

The first 22 residues, 1–22, serve as a signal peptide directing secretion; the sequence is MQPATPLVLCVLLSQVLLLTSA. A propeptide spanning residues 23–138 is cleaved from the precursor; the sequence is EDLDCTPGFQ…RTSPVPRQKR (116 aa). 2 N-linked (GlcNAc...) asparagine glycosylation sites follow: asparagine 52 and asparagine 86. 5 consecutive Cadherin domains span residues 139–245, 246–363, 364–477, 478–585, and 584–694; these read SIVV…RPIF, REGP…SPKF, TKKE…SPVF, YPDP…APFI, and FIYP…AAGA. The interval 156 to 178 is disordered; sequence PRDVGKVVDSDRPEGSKFRLTGK. Over residues 158–172 the composition is skewed to basic and acidic residues; sequence DVGKVVDSDRPEGSK. N-linked (GlcNAc...) asparagine glycosylation is found at asparagine 382, asparagine 489, asparagine 500, asparagine 530, asparagine 598, asparagine 638, and asparagine 671. Glycine 693 carries the GPI-anchor amidated glycine lipid modification. A propeptide spans 694–713 (removed in mature form); the sequence is APHFSAATALLLSLFSLARL.

By contrast to classical cadherins, homodimerization in trans is not mediated by cadherin EC1 domain strand-swapping, but instead through a homophilic adhesive interface which joins two elongated EC1-EC2 domains through a region near their Ca2+-binding sites to form a tetrahedral, X-like shape.

Its subcellular location is the cell membrane. The protein resides in the cytoplasm. Cadherins are calcium-dependent cell adhesion proteins. They preferentially interact with themselves in a homophilic manner in connecting cells; cadherins may thus contribute to the sorting of heterogeneous cell types. May act as a negative regulator of neural cell growth. The protein is Cadherin-13 (CDH13) of Bos taurus (Bovine).